The chain runs to 532 residues: Optineurin (532 aa).

Coiled-coil stretches lie at residues 27–143 and 195–466; these read SMKN…LKLG and EEVA…EEMM. The CCHC NOA-type zinc-finger motif lies at 502–532; that stretch reads QPSITVYTCPKCNLTVPDMDTLQIHVMDCIT. Positions 510, 513, 526, and 530 each coordinate Zn(2+).

Its subcellular location is the cytoplasm. It localises to the perinuclear region. The protein resides in the golgi apparatus. The protein localises to the trans-Golgi network. It is found in the cytoplasmic vesicle. Its subcellular location is the recycling endosome. It localises to the autophagosome. Probably part of the TNF-alpha signaling pathway that can shift the equilibrium toward induction of cell death. May act by regulating membrane trafficking and cellular morphogenesis. In Xenopus laevis (African clawed frog), this protein is Optineurin (optn).